Here is a 94-residue protein sequence, read N- to C-terminus: Small ribosomal subunit protein uS19 (94 aa).

It belongs to the universal ribosomal protein uS19 family.

Its function is as follows. Protein S19 forms a complex with S13 that binds strongly to the 16S ribosomal RNA. The polypeptide is Small ribosomal subunit protein uS19 (Acetivibrio thermocellus (strain ATCC 27405 / DSM 1237 / JCM 9322 / NBRC 103400 / NCIMB 10682 / NRRL B-4536 / VPI 7372) (Clostridium thermocellum)).